We begin with the raw amino-acid sequence, 255 residues long: 1-(5-phosphoribosyl)-5-[(5-phosphoribosylamino)methylideneamino] imidazole-4-carboxamide isomerase (255 aa).

Catalysis depends on D8, which acts as the Proton acceptor. D129 serves as the catalytic Proton donor.

Belongs to the HisA/HisF family.

Its subcellular location is the cytoplasm. The catalysed reaction is 1-(5-phospho-beta-D-ribosyl)-5-[(5-phospho-beta-D-ribosylamino)methylideneamino]imidazole-4-carboxamide = 5-[(5-phospho-1-deoxy-D-ribulos-1-ylimino)methylamino]-1-(5-phospho-beta-D-ribosyl)imidazole-4-carboxamide. Its pathway is amino-acid biosynthesis; L-histidine biosynthesis; L-histidine from 5-phospho-alpha-D-ribose 1-diphosphate: step 4/9. The chain is 1-(5-phosphoribosyl)-5-[(5-phosphoribosylamino)methylideneamino] imidazole-4-carboxamide isomerase from Prochlorococcus marinus (strain AS9601).